A 504-amino-acid polypeptide reads, in one-letter code: Anaerobic nitric oxide reductase transcription regulator NorR (504 aa).

Aspartate 57 carries the post-translational modification 4-aspartylphosphate. The Sigma-54 factor interaction domain occupies 187–416; sequence MIGLSPGMTQ…LEHAIHRAVV (230 aa). Residues 215–222 and 278–287 each bind ATP; these read GETGTGKE and ADNGTLFLDE. Positions 479 to 498 form a DNA-binding region, H-T-H motif; the sequence is WAACARMLETDVANLHRLAK.

The protein operates within nitrogen metabolism; nitric oxide reduction. Its function is as follows. Required for the expression of anaerobic nitric oxide (NO) reductase, acts as a transcriptional activator for at least the norVW operon. Activation also requires sigma-54. This Shigella dysenteriae serotype 1 (strain Sd197) protein is Anaerobic nitric oxide reductase transcription regulator NorR.